The following is a 1120-amino-acid chain: Cluster 41 polyketide synthase (1120 aa).

Positions 7-430 constitute a Ketosynthase family 3 (KS3) domain; that stretch reads PHDVAVVGMG…GTVSHAIIEK (424 aa). Catalysis depends on for beta-ketoacyl synthase activity residues C178, H313, and H353. Residues 539-796 are malonyl-CoA:ACP transacylase (MAT) domain; sequence VWVFSGHGAQ…TSAISAAAED (258 aa). Residue S625 is the For acyl/malonyl transferase activity of the active site. Residues 804-943 form a ketoreductase (KR) domain region; that stretch reads IKKILSMESR…IAMQWTSWRE (140 aa). The 75-residue stretch at 1042–1116 folds into the Carrier domain; that stretch reads DSLSRQVREC…HIVKWLMEKT (75 aa). S1076 carries the post-translational modification O-(pantetheine 4'-phosphoryl)serine.

Polyketide synthase; part of the gene cluster 41 that mediates the biosynthesis of an extracellular and diffusible metabolite that is able to stimulate colony sclerotial production. In Aspergillus flavus (strain ATCC 200026 / FGSC A1120 / IAM 13836 / NRRL 3357 / JCM 12722 / SRRC 167), this protein is Cluster 41 polyketide synthase.